The following is a 95-amino-acid chain: Protein ECS1 (95 aa).

The N-terminal stretch at 1–27 (MASSIVSSMFLFLLLLLVFPHIDNVLG) is a signal peptide.

As to expression, expressed in leaves, flowers and stems, but not in roots.

It is found in the secreted. The protein localises to the cell wall. Functionally, maybe involved in defense responses to X.campestris, but probably not a X.campestris pv. campestris race 750 (e.g. Xcc750) resistance gene; according to genetic data, linked to a locus influencing resistance to Xcc750. The protein is Protein ECS1 of Arabidopsis thaliana (Mouse-ear cress).